Here is a 426-residue protein sequence, read N- to C-terminus: Spermatogenesis-associated protein 2-like protein (426 aa).

Disordered regions lie at residues alanine 204–alanine 223, aspartate 234–leucine 256, leucine 269–glutamate 300, and serine 316–alanine 347. Residues serine 318 and serine 326 each carry the phosphoserine modification.

The protein belongs to the SPATA2 family.

This Mus musculus (Mouse) protein is Spermatogenesis-associated protein 2-like protein.